A 425-amino-acid chain; its full sequence is Type I restriction enzyme MjaVIII specificity subunit (425 aa).

This sequence belongs to the type-I restriction system S methylase family. In terms of assembly, the type I restriction/modification system is composed of three polypeptides R, M and S.

Its function is as follows. The specificity (S) subunit of a type I restriction enzyme; this subunit dictates DNA sequence specificity. The M and S subunits together form a methyltransferase (MTase) that methylates A-2 on the top and A-3 on the bottom strand of the sequence 5'-GAYN(5)GTAA-3'. In the presence of the R subunit the complex can also act as an endonuclease, binding to the same target sequence but cutting the DNA some distance from this site. Whether the DNA is cut or modified depends on the methylation state of the target sequence. When the target site is unmodified, the DNA is cut. When the target site is hemimethylated, the complex acts as a maintenance MTase modifying the DNA so that both strands become methylated. After locating a non-methylated recognition site, the enzyme complex serves as a molecular motor that translocates DNA in an ATP-dependent manner until a collision occurs that triggers cleavage. The protein is Type I restriction enzyme MjaVIII specificity subunit of Methanocaldococcus jannaschii (strain ATCC 43067 / DSM 2661 / JAL-1 / JCM 10045 / NBRC 100440) (Methanococcus jannaschii).